The chain runs to 486 residues: BTB/POZ domain and ankyrin repeat-containing protein BOP (486 aa).

The 91-residue stretch at serine 25 to proline 115 folds into the BTB domain. The C2HC NPR-type zinc-finger motif lies at arginine 121–serine 135. Cysteine 124, cysteine 129, histidine 131, and cysteine 134 together coordinate Zn(2+). ANK repeat units follow at residues glutamine 257–aspartate 286, glutamate 287–tyrosine 316, alanine 321–valine 350, and aspartate 354–leucine 388. Disordered stretches follow at residues glutamate 403–isoleucine 442 and glutamine 464–tyrosine 486. Low complexity-rich tracts occupy residues asparagine 406–threonine 418 and serine 432–isoleucine 442. Over residues serine 466 to aspartate 475 the composition is skewed to basic and acidic residues.

The protein belongs to the plant 'ANKYRIN-BTB/POZ' family. 'NOOT-BOP-COCH-like' (NBCL) subfamily. In terms of assembly, homodimer. Expressed in xylem vessels and parenchyma cells of pedicel vascular tissue in the abscission zone (AZ). Accumulates in developing root nodules and present in roots, especially in the upper part.

The protein localises to the nucleus. Its subcellular location is the cytoplasm. It localises to the cell membrane. The protein operates within protein modification; protein ubiquitination. Functionally, may act as a substrate-specific adapter of an E3 ubiquitin-protein ligase complex (CUL3-RBX1-BTB) which mediates the ubiquitination and subsequent proteasomal degradation of target proteins. Transcriptional co-regulator involved in promoting the fate and determination of leaf and flower meristems. Required for the abscission of senescent organs, probably by regulating the cell wall disorganization in abscission zones (AZs, e.g. pulvini at the base of leaves). Involved in the coordination of the symbiotic nodule developmental program; promotes the formation of root nodules by interacting directly with APP1 to modulate the expression of the nuclear transcription factor Y subunit (NF-YA1), a key nodulin. Necessary for the robust maintenance of nodule identity throughout the nodule developmental program. This Lupinus luteus (European yellow lupine) protein is BTB/POZ domain and ankyrin repeat-containing protein BOP.